A 424-amino-acid polypeptide reads, in one-letter code: 3-phosphoshikimate 1-carboxyvinyltransferase (424 aa).

Lys21, Ser22, and Arg26 together coordinate 3-phosphoshikimate. A phosphoenolpyruvate-binding site is contributed by Lys21. Positions 92 and 120 each coordinate phosphoenolpyruvate. Residues Ser163, Ser164, Gln165, Ser191, Asp306, and Lys333 each contribute to the 3-phosphoshikimate site. Gln165 contacts phosphoenolpyruvate. Asp306 acts as the Proton acceptor in catalysis. The phosphoenolpyruvate site is built by Arg337, Arg379, and Lys405.

The protein belongs to the EPSP synthase family. Monomer.

Its subcellular location is the cytoplasm. It catalyses the reaction 3-phosphoshikimate + phosphoenolpyruvate = 5-O-(1-carboxyvinyl)-3-phosphoshikimate + phosphate. It participates in metabolic intermediate biosynthesis; chorismate biosynthesis; chorismate from D-erythrose 4-phosphate and phosphoenolpyruvate: step 6/7. Catalyzes the transfer of the enolpyruvyl moiety of phosphoenolpyruvate (PEP) to the 5-hydroxyl of shikimate-3-phosphate (S3P) to produce enolpyruvyl shikimate-3-phosphate and inorganic phosphate. This is 3-phosphoshikimate 1-carboxyvinyltransferase from Clostridium perfringens (strain 13 / Type A).